Here is a 422-residue protein sequence, read N- to C-terminus: Gamma-glutamyl phosphate reductase (422 aa).

This sequence belongs to the gamma-glutamyl phosphate reductase family.

It localises to the cytoplasm. It catalyses the reaction L-glutamate 5-semialdehyde + phosphate + NADP(+) = L-glutamyl 5-phosphate + NADPH + H(+). It functions in the pathway amino-acid biosynthesis; L-proline biosynthesis; L-glutamate 5-semialdehyde from L-glutamate: step 2/2. Functionally, catalyzes the NADPH-dependent reduction of L-glutamate 5-phosphate into L-glutamate 5-semialdehyde and phosphate. The product spontaneously undergoes cyclization to form 1-pyrroline-5-carboxylate. This chain is Gamma-glutamyl phosphate reductase, found in Shewanella piezotolerans (strain WP3 / JCM 13877).